Reading from the N-terminus, the 375-residue chain is OVARIAN TUMOR DOMAIN-containing deubiquitinating enzyme 7 (375 aa).

Basic residues predominate over residues 1–18 (MAKTKQQKSKPKKQPHQK). The segment at 1 to 23 (MAKTKQQKSKPKKQPHQKQGKDC) is disordered. Residues 37 to 161 (LKIIQVTADG…GEHYNSVRSK (125 aa)) form the OTU domain. Residue aspartate 45 is part of the active site. The Nucleophile role is filled by cysteine 48. Residue histidine 154 is part of the active site. In terms of domain architecture, UBA-like spans 202 to 250 (HVNAGAIKVVMSGSCCDNTEKAEQVLLQVNGDVDAAIEFLIADQGMESL). 2 stretches are compositionally biased toward polar residues: residues 251–264 (TEND…SDTI) and 290–305 (ASGN…CTTQ). The interval 251–306 (TENDTETASASDTINPKHASDSPMENTEQAREELIEEESASGNNSETVQAKCTTQT) is disordered. The Nuclear localization signal signature appears at 308 to 315 (DKKIPRNK).

The protein belongs to the peptidase C85 family.

The protein resides in the nucleus. It carries out the reaction Thiol-dependent hydrolysis of ester, thioester, amide, peptide and isopeptide bonds formed by the C-terminal Gly of ubiquitin (a 76-residue protein attached to proteins as an intracellular targeting signal).. In terms of biological role, hydrolase that can remove conjugated ubiquitin from proteins in vitro and may therefore play an important regulatory role at the level of protein turnover by preventing degradation. Cysteine protease with a preference for 'Lys-63' over 'Lys-48' over 'Met-1' -linked ubiquitin (UB) tetramers as substrates. Also cleaves RUB-GST fusion. This is OVARIAN TUMOR DOMAIN-containing deubiquitinating enzyme 7 from Arabidopsis thaliana (Mouse-ear cress).